The sequence spans 271 residues: Putative pyruvate, phosphate dikinase regulatory protein (271 aa).

ADP is bound at residue 151 to 158 (GISRTSKT).

This sequence belongs to the pyruvate, phosphate/water dikinase regulatory protein family. PDRP subfamily.

The catalysed reaction is N(tele)-phospho-L-histidyl/L-threonyl-[pyruvate, phosphate dikinase] + ADP = N(tele)-phospho-L-histidyl/O-phospho-L-threonyl-[pyruvate, phosphate dikinase] + AMP + H(+). The enzyme catalyses N(tele)-phospho-L-histidyl/O-phospho-L-threonyl-[pyruvate, phosphate dikinase] + phosphate + H(+) = N(tele)-phospho-L-histidyl/L-threonyl-[pyruvate, phosphate dikinase] + diphosphate. Bifunctional serine/threonine kinase and phosphorylase involved in the regulation of the pyruvate, phosphate dikinase (PPDK) by catalyzing its phosphorylation/dephosphorylation. In Streptococcus uberis (strain ATCC BAA-854 / 0140J), this protein is Putative pyruvate, phosphate dikinase regulatory protein.